A 432-amino-acid chain; its full sequence is Metacaspase-1 (432 aa).

Positions Met1–Ser11 are enriched in basic residues. 2 disordered regions span residues Met1–Arg21 and Pro41–Pro87. The span at Ser12–Arg21 shows a compositional bias: low complexity. A compositionally biased stretch (pro residues) spans Gly46–Gln74. Residues His223 and Cys279 contribute to the active site.

It belongs to the peptidase C14B family.

Involved in cell death (apoptosis). The chain is Metacaspase-1 (casA) from Sclerotinia sclerotiorum (strain ATCC 18683 / 1980 / Ss-1) (White mold).